The following is a 127-amino-acid chain: Protein ApaG (127 aa).

Positions 3-127 constitute an ApaG domain; that stretch reads ANSPPTIKCN…FRLAIPNILH (125 aa).

The sequence is that of Protein ApaG from Photobacterium profundum (strain SS9).